A 182-amino-acid chain; its full sequence is Transcription termination/antitermination protein NusG (182 aa).

The KOW domain occupies 131–163 (VGEQVRIKSGPFANQVGEVQEIETDKFKLTVLV).

It belongs to the NusG family.

Functionally, participates in transcription elongation, termination and antitermination. In Staphylococcus aureus (strain NCTC 8325 / PS 47), this protein is Transcription termination/antitermination protein NusG.